The sequence spans 367 residues: Mannan endo-1,4-beta-mannosidase (367 aa).

Positions 1 to 17 (MLLTALAVLFASTGCQA) are cleaved as a signal peptide. Substrate is bound by residues W79 and N176. E177 acts as the Proton donor in catalysis. Residues C192 and C259 are joined by a disulfide bond. Substrate contacts are provided by W205, W240, and Y279. The Nucleophile role is filled by E308. W337 contributes to the substrate binding site.

In terms of assembly, monomer. The disulfide bond between Cys-192 and Cys-259 has not been observed in X-ray crystallography. This may be a consequence of the X-ray radiation.

The catalysed reaction is Random hydrolysis of (1-&gt;4)-beta-D-mannosidic linkages in mannans, galactomannans and glucomannans.. Functionally, hydrolyzes 1,4-beta linked polysaccharide backbones of mannans. Hydrolyzes mannohexaose (M6) preferentially to mannotriose (M4) and less preferentially to mannotetraose (M3), mannopentaose (M5), and mannobiose (M2); hydrolyzes M5 preferentially to M2, and M3, and less preferentially to mannotetraose M4; hydrolyzes M4 preferentially to M3, and less preferentially to mannose (M1), plus very little M2. Does not hydrolyze mannobiose or mannotriose. Does not hydrolyze xlyan, starch, cellulose or galactose. In Mytilus edulis (Blue mussel), this protein is Mannan endo-1,4-beta-mannosidase.